The sequence spans 215 residues: Cytochrome b6 (215 aa).

Residues 32-52 (IFYCLGGVTLVCFIIQFATGF) form a helical membrane-spanning segment. Position 35 (C35) interacts with heme c. Heme b-binding residues include H86 and H100. A run of 3 helical transmembrane segments spans residues 90 to 110 (ASMM…TGGF), 116 to 136 (LTWI…VTGY), and 186 to 206 (LHTF…FLMI). H187 and H202 together coordinate heme b.

Belongs to the cytochrome b family. PetB subfamily. The 4 large subunits of the cytochrome b6-f complex are cytochrome b6, subunit IV (17 kDa polypeptide, PetD), cytochrome f and the Rieske protein, while the 4 small subunits are PetG, PetL, PetM and PetN. The complex functions as a dimer. Heme b is required as a cofactor. Heme c serves as cofactor.

The protein resides in the cellular thylakoid membrane. Functionally, component of the cytochrome b6-f complex, which mediates electron transfer between photosystem II (PSII) and photosystem I (PSI), cyclic electron flow around PSI, and state transitions. The chain is Cytochrome b6 from Acaryochloris marina (strain MBIC 11017).